The chain runs to 897 residues: Alanine--tRNA ligase (897 aa).

Zn(2+) contacts are provided by histidine 581, histidine 585, cysteine 684, and histidine 688.

Belongs to the class-II aminoacyl-tRNA synthetase family. Zn(2+) serves as cofactor.

The protein localises to the cytoplasm. The enzyme catalyses tRNA(Ala) + L-alanine + ATP = L-alanyl-tRNA(Ala) + AMP + diphosphate. In terms of biological role, catalyzes the attachment of alanine to tRNA(Ala) in a two-step reaction: alanine is first activated by ATP to form Ala-AMP and then transferred to the acceptor end of tRNA(Ala). Also edits incorrectly charged Ser-tRNA(Ala) and Gly-tRNA(Ala) via its editing domain. This is Alanine--tRNA ligase from Mycobacterium sp. (strain JLS).